Here is a 334-residue protein sequence, read N- to C-terminus: Formamidase (334 aa).

In terms of domain architecture, CN hydrolase spans 14 to 260 (FLVAAIQFPV…WEIVTGEIYP (247 aa)). The Proton acceptor role is filled by Glu-60. The Proton donor role is filled by Lys-133. Cys-166 acts as the Nucleophile in catalysis.

Belongs to the carbon-nitrogen hydrolase superfamily. Aliphatic amidase family.

It carries out the reaction formamide + H2O = formate + NH4(+). Its function is as follows. Is an aliphatic amidase with a restricted substrate specificity, as it only hydrolyzes formamide. The protein is Formamidase of Helicobacter pylori (strain J99 / ATCC 700824) (Campylobacter pylori J99).